The sequence spans 356 residues: 5-formaminoimidazole-4-carboxamide-1-(beta)-D-ribofuranosyl 5'-monophosphate synthetase (356 aa).

5-amino-1-(5-phospho-beta-D-ribosyl)imidazole-4-carboxamide contacts are provided by histidine 27 and serine 94. Residues 116-333 (RCLAWESDRE…YSDLIEKGLS (218 aa)) form the ATP-grasp domain. ATP contacts are provided by residues 145-196 (AELI…TRYY) and glutamate 226. Residue asparagine 255 coordinates 5-amino-1-(5-phospho-beta-D-ribosyl)imidazole-4-carboxamide. Mg(2+) contacts are provided by glutamate 293 and glutamate 306.

The protein belongs to the phosphohexose mutase family. Mg(2+) is required as a cofactor. Requires Mn(2+) as cofactor.

It carries out the reaction 5-amino-1-(5-phospho-beta-D-ribosyl)imidazole-4-carboxamide + formate + ATP = 5-formamido-1-(5-phospho-D-ribosyl)imidazole-4-carboxamide + ADP + phosphate. The protein operates within purine metabolism; IMP biosynthesis via de novo pathway; 5-formamido-1-(5-phospho-D-ribosyl)imidazole-4-carboxamide from 5-amino-1-(5-phospho-D-ribosyl)imidazole-4-carboxamide (formate route): step 1/1. In terms of biological role, catalyzes the ATP- and formate-dependent formylation of 5-aminoimidazole-4-carboxamide-1-beta-d-ribofuranosyl 5'-monophosphate (AICAR) to 5-formaminoimidazole-4-carboxamide-1-beta-d-ribofuranosyl 5'-monophosphate (FAICAR) in the absence of folates. The chain is 5-formaminoimidazole-4-carboxamide-1-(beta)-D-ribofuranosyl 5'-monophosphate synthetase from Methanothrix thermoacetophila (strain DSM 6194 / JCM 14653 / NBRC 101360 / PT) (Methanosaeta thermophila).